The primary structure comprises 152 residues: MLQKNKLSLSVQYPDKRLQDIITRPKLRSWVKAALLAPAQITLRFVDAAEGKDLNRNYRGKDYATNVLTFAYTEDEDSETTQADIILCTDVLQLEAAEQEKSVEEHAAHLVVHGVLHAQGYDHESDEEAEEMEALEIEILADLGFRNPYINL.

Zn(2+) contacts are provided by histidine 113, histidine 117, and histidine 123.

The protein belongs to the endoribonuclease YbeY family. The cofactor is Zn(2+).

It localises to the cytoplasm. Single strand-specific metallo-endoribonuclease involved in late-stage 70S ribosome quality control and in maturation of the 3' terminus of the 16S rRNA. The protein is Endoribonuclease YbeY of Janthinobacterium sp. (strain Marseille) (Minibacterium massiliensis).